A 304-amino-acid polypeptide reads, in one-letter code: Carnitine monooxygenase reductase subunit (304 aa).

The FAD-binding FR-type domain occupies 1–93 (MEQLTPLIKR…SEPKNLFPLA (93 aa)). The 86-residue stretch at 219–304 (FTVVLAKSNQ…AKGKKLVLDL (86 aa)) folds into the 2Fe-2S ferredoxin-type domain. Cys-253, Cys-258, Cys-261, and Cys-291 together coordinate [2Fe-2S] cluster.

The protein belongs to the PDR/VanB family. CntB subfamily. As to quaternary structure, composed of an oxygenase subunit and a reductase subunit. It depends on FMN as a cofactor. [2Fe-2S] cluster is required as a cofactor.

The catalysed reaction is (R)-carnitine + NADH + O2 + H(+) = (3R)-3-hydroxy-4-oxobutanoate + trimethylamine + NAD(+) + H2O. It carries out the reaction (R)-carnitine + NADPH + O2 + H(+) = (3R)-3-hydroxy-4-oxobutanoate + trimethylamine + NADP(+) + H2O. Its pathway is amine and polyamine metabolism; carnitine metabolism. Its activity is regulated as follows. Inhibited by EDTA. In terms of biological role, converts carnitine to trimethylamine and malic semialdehyde. Acts on both enantiomers. The chain is Carnitine monooxygenase reductase subunit from Acinetobacter pittii (strain PHEA-2).